Reading from the N-terminus, the 400-residue chain is MGGWSSKPRQGMGTNLSVPNPLGFFPDHQLDPAFGANSNNPDWDFNPNKDHWPEANQVGVGTFGPGFTPPHGGLLGWSPQAQGILTTVPAAPPPASTNRQSGRQPTPISPPLRDSHPQAMQWNSTTFHQALLDPRVRGLYFPAGGSSSGTVNPVPTTASPISSIFSRTGDPAPNMENTTSGFLGPLLVLQAGFFLLTRILTIPQSLDSWWTSLNFLGGAPTCPGQNSQSPTSNHSPTSCPPICPGYRWMCLRRFIIFLFILLLCLIFLLVLLDYQGMLPVCPLLPGTSTTSTGPCKTCTTPAQGTSMFPSCCCTKPSDGNCTCIPIPSSWAFARFLWEWASVRFSWLSLLVPFVQWFAGLSPTVWLSVIWMMWYWGPSLYNILSPFLPLLPIFFCLWVYI.

The residue at position 1 (M1) is an N-acetylmethionine. Disordered regions lie at residues 1–54 and 85–116; these read MGGW…HWPE and LTTVPAAPPPASTNRQSGRQPTPISPPLRDSH. A lipid anchor (N-myristoyl glycine; by host) is attached at G2. Residues 2–119 are pre-S1; that stretch reads GGWSSKPRQG…PPLRDSHPQA (118 aa). Residues 2–174 are pre-S; the sequence is GGWSSKPRQG…FSRTGDPAPN (173 aa). Over 2-181 the chain is Virion surface; in external conformation; the sequence is GGWSSKPRQG…APNMENTTSG (180 aa). The Intravirion; in internal conformation portion of the chain corresponds to 2–253; that stretch reads GGWSSKPRQG…PGYRWMCLRR (252 aa). A glycan (N-linked (GlcNAc...) asparagine) is linked at W4. Residues 96 to 106 show a composition bias toward polar residues; sequence STNRQSGRQPT. Residues 120 to 174 are pre-S2; the sequence is MQWNSTTFHQALLDPRVRGLYFPAGGSSSGTVNPVPTTASPISSIFSRTGDPAPN. Residues 182-202 traverse the membrane as a helical segment; the sequence is FLGPLLVLQAGFFLLTRILTI. Residues 203-253 are Intravirion; in external conformation-facing; sequence PQSLDSWWTSLNFLGGAPTCPGQNSQSPTSNHSPTSCPPICPGYRWMCLRR. Residues 254–274 traverse the membrane as a helical segment; that stretch reads FIIFLFILLLCLIFLLVLLDY. Residues 275–348 lie on the Virion surface side of the membrane; sequence QGMLPVCPLL…WASVRFSWLS (74 aa). An N-linked (GlcNAc...) asparagine; by host glycan is attached at N320. The chain crosses the membrane as a helical span at residues 349–369; sequence LLVPFVQWFAGLSPTVWLSVI. Over 370–375 the chain is Intravirion; the sequence is WMMWYW. The chain crosses the membrane as a helical span at residues 376–398; it reads GPSLYNILSPFLPLLPIFFCLWV. Over 399–400 the chain is Virion surface; sequence YI.

It belongs to the orthohepadnavirus major surface antigen family. As to quaternary structure, in its internal form (Li-HBsAg), interacts with the capsid protein and with the isoform S. Interacts with host chaperone CANX. Associates with host chaperone CANX through its pre-S2 N glycan; this association may be essential for isoform M proper secretion. In terms of assembly, interacts with isoform L. Interacts with the antigens of satellite virus HDV (HDVAgs); this interaction is required for encapsidation of HDV genomic RNA. In terms of processing, isoform M is N-terminally acetylated by host at a ratio of 90%, and N-glycosylated by host at the pre-S2 region. Post-translationally, myristoylated.

It is found in the virion membrane. Functionally, the large envelope protein exists in two topological conformations, one which is termed 'external' or Le-HBsAg and the other 'internal' or Li-HBsAg. In its external conformation the protein attaches the virus to cell receptors and thereby initiating infection. This interaction determines the species specificity and liver tropism. This attachment induces virion internalization predominantly through caveolin-mediated endocytosis. The large envelope protein also assures fusion between virion membrane and endosomal membrane. In its internal conformation the protein plays a role in virion morphogenesis and mediates the contact with the nucleocapsid like a matrix protein. The middle envelope protein plays an important role in the budding of the virion. It is involved in the induction of budding in a nucleocapsid independent way. In this process the majority of envelope proteins bud to form subviral lipoprotein particles of 22 nm of diameter that do not contain a nucleocapsid. The sequence is that of Large envelope protein from Homo sapiens (Human).